Here is a 122-residue protein sequence, read N- to C-terminus: Small ribosomal subunit protein uS13 (122 aa).

Residues 93–122 (RRGLPVRGQRTKTNARTRKGPKKTIAGKKK) form a disordered region.

The protein belongs to the universal ribosomal protein uS13 family. As to quaternary structure, part of the 30S ribosomal subunit. Forms a loose heterodimer with protein S19. Forms two bridges to the 50S subunit in the 70S ribosome.

Its function is as follows. Located at the top of the head of the 30S subunit, it contacts several helices of the 16S rRNA. In the 70S ribosome it contacts the 23S rRNA (bridge B1a) and protein L5 of the 50S subunit (bridge B1b), connecting the 2 subunits; these bridges are implicated in subunit movement. Contacts the tRNAs in the A and P-sites. The polypeptide is Small ribosomal subunit protein uS13 (Corynebacterium urealyticum (strain ATCC 43042 / DSM 7109)).